Consider the following 269-residue polypeptide: Formamidopyrimidine-DNA glycosylase (269 aa).

The active-site Schiff-base intermediate with DNA is the Pro-2. The Proton donor role is filled by Glu-3. Catalysis depends on Lys-57, which acts as the Proton donor; for beta-elimination activity. His-90, Arg-109, and Lys-150 together coordinate DNA. An FPG-type zinc finger spans residues 235 to 269 (FVYGRAGEPCRICGEQIESIKLGQRSTFFCRHCQY). Arg-259 (proton donor; for delta-elimination activity) is an active-site residue.

This sequence belongs to the FPG family. As to quaternary structure, monomer. Requires Zn(2+) as cofactor.

It catalyses the reaction Hydrolysis of DNA containing ring-opened 7-methylguanine residues, releasing 2,6-diamino-4-hydroxy-5-(N-methyl)formamidopyrimidine.. The catalysed reaction is 2'-deoxyribonucleotide-(2'-deoxyribose 5'-phosphate)-2'-deoxyribonucleotide-DNA = a 3'-end 2'-deoxyribonucleotide-(2,3-dehydro-2,3-deoxyribose 5'-phosphate)-DNA + a 5'-end 5'-phospho-2'-deoxyribonucleoside-DNA + H(+). In terms of biological role, involved in base excision repair of DNA damaged by oxidation or by mutagenic agents. Acts as a DNA glycosylase that recognizes and removes damaged bases. Has a preference for oxidized purines, such as 7,8-dihydro-8-oxoguanine (8-oxoG). Has AP (apurinic/apyrimidinic) lyase activity and introduces nicks in the DNA strand. Cleaves the DNA backbone by beta-delta elimination to generate a single-strand break at the site of the removed base with both 3'- and 5'-phosphates. This Photorhabdus laumondii subsp. laumondii (strain DSM 15139 / CIP 105565 / TT01) (Photorhabdus luminescens subsp. laumondii) protein is Formamidopyrimidine-DNA glycosylase.